The sequence spans 303 residues: Coenzyme PQQ synthesis protein B (303 aa).

This sequence belongs to the PqqB family.

It functions in the pathway cofactor biosynthesis; pyrroloquinoline quinone biosynthesis. Its function is as follows. May be involved in the transport of PQQ or its precursor to the periplasm. The protein is Coenzyme PQQ synthesis protein B of Pseudomonas fluorescens (strain SBW25).